The primary structure comprises 337 residues: Cytoskeleton protein RodZ (337 aa).

Residues 1–111 (MNTEATHDQN…LGKRRKKRDG (111 aa)) lie on the Cytoplasmic side of the membrane. Residues 19-71 (LRNAREQLGLSQQAVAERLCLKVSTVRDIEEDKAPADLASTFLRGYIRSYARL) form the HTH cro/C1-type domain. Residues 30-49 (QQAVAERLCLKVSTVRDIEE) constitute a DNA-binding region (H-T-H motif). The chain crosses the membrane as a helical; Signal-anchor for type II membrane protein span at residues 112–132 (WLMTFTWLVLFVVIGLSGAWW). The Periplasmic segment spans residues 133–337 (WQDHKAQQEE…TLNAEQSPAQ (205 aa)). A compositionally biased stretch (polar residues) spans 145–167 (TMADQSSAELSSNSEQGQSVPLN). Positions 145–220 (TMADQSSAEL…VSPSQANVDT (76 aa)) are disordered. Low complexity predominate over residues 168–207 (TSTTTDPATTSTPPASVDTTATNTQTPAVTAPAPAVDPQQ). Positions 208-218 (NAVVSPSQANV) are enriched in polar residues.

It belongs to the RodZ family.

The protein localises to the cell inner membrane. Its function is as follows. Cytoskeletal protein that is involved in cell-shape control through regulation of the length of the long axis. This Escherichia coli O17:K52:H18 (strain UMN026 / ExPEC) protein is Cytoskeleton protein RodZ.